A 248-amino-acid chain; its full sequence is 3-deoxy-manno-octulosonate cytidylyltransferase (248 aa).

It belongs to the KdsB family.

The protein localises to the cytoplasm. The enzyme catalyses 3-deoxy-alpha-D-manno-oct-2-ulosonate + CTP = CMP-3-deoxy-beta-D-manno-octulosonate + diphosphate. The protein operates within nucleotide-sugar biosynthesis; CMP-3-deoxy-D-manno-octulosonate biosynthesis; CMP-3-deoxy-D-manno-octulosonate from 3-deoxy-D-manno-octulosonate and CTP: step 1/1. It participates in bacterial outer membrane biogenesis; lipopolysaccharide biosynthesis. Functionally, activates KDO (a required 8-carbon sugar) for incorporation into bacterial lipopolysaccharide in Gram-negative bacteria. The polypeptide is 3-deoxy-manno-octulosonate cytidylyltransferase (Enterobacter sp. (strain 638)).